A 57-amino-acid chain; its full sequence is Cold shock protein CspB (57 aa).

The CSD domain maps to 1 to 57 (IKWFNSEKGFGFIEVEGQDDVFVHFSAIQGEGFKCLEEGQAVSFEIVEGNRGPQAAN).

As to quaternary structure, homodimer.

It is found in the cytoplasm. In terms of biological role, affects cell viability at low temperatures. This is Cold shock protein CspB (cspB) from Sporosarcina globispora (Bacillus globisporus).